Here is a 532-residue protein sequence, read N- to C-terminus: MIKKIILFFAVLIAIVIGQQPLNVVPYPQQVSIGTCVIPVAPGSILIESNIESATFSVSMDRYTNLFFPFSNESEPSSNESFLLSVTIYSDDETLQLGIDESYSLSIEQGSYQLKATNIYGAMRGLETFKQLIVYNELENSYSIVCVSISDSPRYPWRGFMVDSARHYIPKNMILHMIDSLGFSKFNTLHWHMVDAVAFPVESTTYPDLTKGAFSPSATFSHDDIQEVVAYAKTYGIRVIPEFDIPGHAAAWGIGYPELVATCPDYAANVNNIPLDISNPATFTFIQNLFTEIAPLFIDNYFHTGGDELVTGCWLEDPAIANWMTKMGFSTTDAFQYFENNLDVTMKSINRTKITWNDPIDYGVQLNPETLVQVWSSGSDLQGIVNSGYKALVSFAWYLDKQNPDNNIHYEWQDTWQDFYAADPTNNISTNAENIIGGEATMWAEQINQVNWDVRVWPRAIGIAERLWSAQSVNSVSLALPRIGHFTCDLSRRGIQSGPLFPDYCPMQDDLVFTMKPNTKLSKSEIKLILNK.

Positions 1–18 (MIKKIILFFAVLIAIVIG) are cleaved as a signal peptide. N-linked (GlcNAc...) asparagine glycans are attached at residues asparagine 72 and asparagine 79. Catalysis depends on glutamate 308, which acts as the Proton donor. N-linked (GlcNAc...) asparagine glycosylation is found at asparagine 350 and asparagine 427.

The protein belongs to the glycosyl hydrolase 20 family. As to quaternary structure, dimer. In terms of processing, the N-terminus is blocked. N-glycosylated.

It is found in the lysosome. It carries out the reaction Hydrolysis of terminal non-reducing N-acetyl-D-hexosamine residues in N-acetyl-beta-D-hexosaminides.. Its function is as follows. Responsible for the degradation of GM2 gangliosides, and a variety of other molecules containing terminal N-acetyl hexosamines. This enzyme plays a role during the slug stage of development in the maintenance of pseudoplasmodia of normal size. The sequence is that of Beta-hexosaminidase subunit A1 (hexa1) from Dictyostelium discoideum (Social amoeba).